The chain runs to 257 residues: MIDVQSRFDSRNIRVDKVGVKDIRYPITVMDKTNGIQHTVASVNMYVNLPREFKGTHMSRFIEILNEFHGNLDIREFPSILQSVQEHLSAESAHLELSFSYFIKKLSPVTGCAGLMEYGCRVAGSLDSNRGHDLVLEVNVPISTVCPCSKEISSYGAHNQRGMVRLAVRFKKFVWIEDLVRLVECAASSEVYSVLKRPDEKFVTESAFDNPKFVEDVVRDIAKELKADQNISWFLVDVENFESIHNHSAYACIERSK.

It belongs to the GTP cyclohydrolase IV family.

The enzyme catalyses GTP + H2O = 7,8-dihydroneopterin 3'-triphosphate + formate + H(+). Its pathway is cofactor biosynthesis; 7,8-dihydroneopterin triphosphate biosynthesis; 7,8-dihydroneopterin triphosphate from GTP: step 1/1. Its function is as follows. Converts GTP to 7,8-dihydroneopterin triphosphate. The sequence is that of GTP cyclohydrolase FolE2 from Syntrophobacter fumaroxidans (strain DSM 10017 / MPOB).